The chain runs to 400 residues: Na(+)/H(+) antiporter NhaA (400 aa).

11 consecutive transmembrane segments (helical) span residues 10 to 30 (FNLE…AMII), 60 to 80 (AHHW…GLEL), 95 to 115 (IILP…VYLF), 126 to 146 (GWAI…SLLG), 155 to 175 (VFLV…IALF), 178 to 198 (NDLS…LYLL), 218 to 238 (VAVL…ALFI), 265 to 285 (GILP…AGFG), 295 to 315 (IAAG…WLIF), 334 to 354 (AALL…LAFA), and 364 to 384 (LGII…LKAT).

The protein belongs to the NhaA Na(+)/H(+) (TC 2.A.33) antiporter family.

It is found in the cell inner membrane. The catalysed reaction is Na(+)(in) + 2 H(+)(out) = Na(+)(out) + 2 H(+)(in). Functionally, na(+)/H(+) antiporter that extrudes sodium in exchange for external protons. In Psychrobacter cryohalolentis (strain ATCC BAA-1226 / DSM 17306 / VKM B-2378 / K5), this protein is Na(+)/H(+) antiporter NhaA.